We begin with the raw amino-acid sequence, 476 residues long: Nyctalopin (476 aa).

Residues 1–18 form the signal peptide; it reads MLVLLLHAVVLGLPSAWA. LRR repeat units lie at residues 60-84, 85-108, 110-133, 134-157, 159-181, 182-204, 205-228, 229-252, 254-276, 277-300, and 302-324; these read VSIDLDRNGLRFLGERAFGTLPSLR, RLSLRHNNLSFITPGAFKGLPRLA, LRLAHNGDLRYLHARTFAALSRLR, RLDLAACRLFSVPERLLAELPALR, LAAFDNLFRRVPGALRGLANLTH, AHLERGRIEAVASSSLQGLRRLR, SLSLQANRVRAVHAGAFGDCGVLE, HLLLNDNLLAELPADAFRGLRRLR, LNLGGNALDRVARAWFADLAELE, LLYLDRNSIAFVEEGAFQNLSGLL, and LHLNGNRLTVLAWVAFQPGFFLG. Asn92 carries an N-linked (GlcNAc...) asparagine glycan. Residue Asn178 is glycosylated (N-linked (GlcNAc...) asparagine). Residue Asn295 is glycosylated (N-linked (GlcNAc...) asparagine). An LRRCT domain is found at 336–387; that stretch reads DCRLEWLRDWMEGSGRVTDVPCASPGSVAGLDLSQVTFGRSSDGLCVDPEEL. Residues Asn388, Asn427, and Asn434 are each glycosylated (N-linked (GlcNAc...) asparagine).

The protein belongs to the small leucine-rich proteoglycan (SLRP) family. SLRP class IV subfamily. Expressed in kidney and retina. Also at low levels in brain, testis and muscle. Within the retina, expressed in the inner segment of photoreceptors, outer and inner nuclear layers and the ganglion cell layer.

The protein localises to the secreted. Its subcellular location is the extracellular space. It localises to the extracellular matrix. In Homo sapiens (Human), this protein is Nyctalopin (NYX).